The following is a 282-amino-acid chain: Glycine betaine/carnitine transport permease protein GbuB (282 aa).

6 consecutive transmembrane segments (helical) span residues 44 to 64 (VFDL…TFWV), 70 to 90 (KWGL…LDFW), 99 to 119 (LVLT…IWMA), 140 to 160 (AFVY…PGVV), 220 to 240 (IMLA…GLGT), and 251 to 271 (AGGG…LDRL). The ABC transmembrane type-1 domain maps to 93–272 (MTQTLTLVLT…IVAIILDRLT (180 aa)).

The protein belongs to the binding-protein-dependent transport system permease family. The complex is composed of two ATP-binding proteins (GbuA), two transmembrane proteins (GbuB) and a solute-binding protein (GbuC).

The protein resides in the cell membrane. Its activity is regulated as follows. The complex is activated by an osmotic gradient or by low temperature. In terms of biological role, part of the ABC transporter complex GbuABC involved in glycine betaine uptake. Responsible for the translocation of the substrate across the membrane. Involved, with BetL and OpuC, in osmoprotection and cryoprotection of Listeria. Can also uptake carnitine when carnitine is abundant in the growth medium. This is Glycine betaine/carnitine transport permease protein GbuB (gbuB) from Listeria monocytogenes serotype 1/2a (strain 10403S).